The following is a 170-amino-acid chain: Myosin regulatory light chain 2, skeletal muscle isoform (170 aa).

A2 carries the post-translational modification N,N,N-trimethylalanine. Phosphoserine occurs at positions 16 and 17. Residues T26 and T36 each carry the phosphothreonine modification. The region spanning T26–L61 is the EF-hand 1 domain. Ca(2+)-binding residues include D39, N41, D43, and D50. Residue S76 is modified to Phosphoserine. 2 consecutive EF-hand domains span residues D96 to R131 and F132 to K167. T102 carries the post-translational modification Phosphothreonine.

As to quaternary structure, myosin is a hexamer of 2 heavy chains and 4 light chains.

Plays a role in muscle contraction. This Bos taurus (Bovine) protein is Myosin regulatory light chain 2, skeletal muscle isoform.